The following is a 482-amino-acid chain: E3 ubiquitin-protein ligase parkin (482 aa).

One can recognise a Ubiquitin-like domain in the interval 30–99; the sequence is LSIYVKTNTG…LGQQSVLHAI (70 aa). Phosphoserine; by Pink1 is present on S94. The segment at 157 to 246 adopts an RING-type 0; atypical zinc-finger fold; it reads AHFFVHCSQC…SGGEKDFAAP (90 aa). Residues C163, C166, C178, and C181 each contribute to the Zn(2+) site. Phosphothreonine; by Pink1 is present on T187. The Zn(2+) site is built by C208, C232, H235, C259, C262, C274, H278, C281, C284, C310, C314, C353, C358, C373, C377, C382, C385, H390, C394, C436, and C439. The TRIAD supradomain stretch occupies residues 255–482; it reads KNVPCLACTD…RDCMGAHWFG (228 aa). An RING-type 1 zinc finger spans residues 259–314; it reads CLACTDVSDTVLVFPCASQHVTCIDCFRHYCRSRLGERQFMPHPDFGYTLPCPAGC. 2 consecutive IBR-type zinc fingers follow at residues 334-394 and 432-473; these read DRYQ…IGEC and STKP…EWTR. The segment at 436-467 adopts an RING-type 2; atypical zinc-finger fold; the sequence is CPKCRTPTERDGGCMHMVCTRAGCGFEWCWVC. Residue C449 is part of the active site. C454, C459, C464, C467, C475, and H479 together coordinate Zn(2+).

It belongs to the RBR family. Parkin subfamily. In terms of assembly, forms an E3 ubiquitin ligase complex with E2 ubiquitin-conjugating enzymes. Interacts with Pink1. Interacts with Marf. Interacts with Paris. Interacts with septins Septin1 and pnut. Auto-ubiquitinates in an E2-dependent manner leading to its own degradation. Post-translationally, phosphorylated. Activation requires phosphorylation at Ser-94 by Pink1 and binding to Pink1-phosphorylated polyubiquitin chains. Phosphorylation at Thr-187 by Pink1 is also important for mitochondrial localization. In terms of tissue distribution, in oocytes, accumulates in early egg chambers where it is enriched until stages 9-10, localizing mainly to the posterior pole and anterior margin (at protein level). After stage 10 it is no longer detected in the oocyte (at protein level). In embryos, ubiquitously expressed in the early stages (stages 2 to 5) (at protein level). Expression levels decrease at later stages and becomes restricted to the brain and nerve cord from stage 9 (at protein level). Relatively higher levels of expression in the head compared to the body. Enriched in the dorsomedial (DM) dopaminergic neurons.

Its subcellular location is the mitochondrion. The protein resides in the cytoplasm. It localises to the cytosol. The catalysed reaction is [E2 ubiquitin-conjugating enzyme]-S-ubiquitinyl-L-cysteine + [acceptor protein]-L-lysine = [E2 ubiquitin-conjugating enzyme]-L-cysteine + [acceptor protein]-N(6)-ubiquitinyl-L-lysine.. It functions in the pathway protein modification; protein ubiquitination. In the autoinhibited state the side chain of Phe-481 inserts into a hydrophobic groove in RING-0, occluding the ubiquitin acceptor site Cys-449, whereas the REP repressor element binds RING-1 and blocks its E2-binding site. Activation of park requires 2 steps: (1) phosphorylation at Ser-94 by Pink1 and (2) binding to phosphorylated ubiquitin, leading to unlock repression of the catalytic Cys-449 by the RING-0 region via an allosteric mechanism and converting park to its fully-active form. According to another report, phosphorylation at Ser-94 by Pink1 is not essential for activation and only binding to phosphorylated ubiquitin is essential to unlock repression. E3 ubiquitin-protein ligase which accepts ubiquitin from E2 ubiquitin-conjugating enzymes in the form of a thioester and then directly transfers the ubiquitin to targeted substrates, such as Paris, Marf, Opa1, Miro, pnut, Septin1, Tom20 and porin. Mediates monoubiquitination as well as 'Lys-6', 'Lys-11', 'Lys-48'-linked and 'Lys-63'-linked polyubiquitination of substrates, depending on the context. Protects against mitochondrial dysfunction during cellular stress, by acting downstream of Pink1, to coordinate mitochondrial quality control mechanisms that remove and replace dysfunctional mitochondrial components. Depending on the severity of mitochondrial damage and/or dysfunction, activity ranges from preventing apoptosis and stimulating mitochondrial biogenesis to regulating mitochondrial dynamics and eliminating severely damaged mitochondria via mitophagy. Appears to be particularly important in maintaining the physiology and function of cells with high energy demands that are undergoing stress or altered metabolic environment, including spermatids, muscle cells and neurons such as the dopaminergic (DA) neurons. Activation and recruitment onto the outer membrane of damaged/dysfunctional mitochondria (OMM) requires Pink1-mediated phosphorylation of both park and ubiquitin. In depolarized mitochondria, mediates the decision between mitophagy or preventing apoptosis by inducing either the poly- or monoubiquitination of porin/VDAC; polyubiquitination of porin promotes mitophagy, while monoubiquitination of porin decreases mitochondrial calcium influx which ultimately inhibits apoptosis. When cellular stress results in irreversible mitochondrial damage, promotes the autophagic degradation of dysfunctional depolarized mitochondria (mitophagy) by promoting the ubiquitination of mitochondrial proteins. Preferentially assembles 'Lys-6'-, 'Lys-11'- and 'Lys-63'-linked polyubiquitin chains following mitochondrial damage, leading to mitophagy. In developing tissues, inhibits JNK-mediated apoptosis by negatively regulating bsk transcription. The Pink1-park pathway also promotes fission and/or inhibits fusion of damaged mitochondria by mediating the ubiquitination and subsequent degradation of proteins involved in mitochondrial fusion/fission such as Marf, Opa1 and fzo. This prevents the refusion of unhealthy mitochondria with the healthy mitochondrial network and/or initiates mitochondrial fragmentation facilitating their later engulfment by autophagosomes. Regulates motility of damaged mitochondria by phosphorylating Miro which likely promotes its park-dependent degradation by the proteasome; in motor neurons, this inhibits mitochondrial intracellular anterograde transport along the axons which probably increases the chance of the mitochondria being eliminated in the soma. The Pink1-park pathway is also involved in mitochondrial regeneration processes such as promoting mitochondrial biogenesis, activating localized mitochondrial repair, promoting selective turnover of mitochondrial proteins and initiating the mitochondrial import of endogenous proteins. Involved in mitochondrial biogenesis via the ubiquitination of transcriptional repressor Paris which leads to its subsequent proteasomal degradation and allows activation of the transcription factor srl. Promotes localized mitochondrial repair by activating the translation of specific nuclear-encoded mitochondrial RNAs (nc-mtRNAs) on the mitochondrial surface, including several key electron transport chain component nc-mtRNAs. This is E3 ubiquitin-protein ligase parkin from Drosophila melanogaster (Fruit fly).